A 443-amino-acid polypeptide reads, in one-letter code: 23S rRNA (uracil(1939)-C(5))-methyltransferase RlmD (443 aa).

Positions 12–70 constitute a TRAM domain; it reads SKQLSAKVSLQVTRLDHLGAGIAQHNGKVVFIPGVLPGEKAMVQLTEQKKRYSRAKLLN. [4Fe-4S] cluster is bound by residues cysteine 83, cysteine 89, cysteine 92, and cysteine 171. Glutamine 277, phenylalanine 306, asparagine 311, glutamate 327, aspartate 354, and aspartate 374 together coordinate S-adenosyl-L-methionine. The active-site Nucleophile is cysteine 400.

The protein belongs to the class I-like SAM-binding methyltransferase superfamily. RNA M5U methyltransferase family. RlmD subfamily.

It carries out the reaction uridine(1939) in 23S rRNA + S-adenosyl-L-methionine = 5-methyluridine(1939) in 23S rRNA + S-adenosyl-L-homocysteine + H(+). Its function is as follows. Catalyzes the formation of 5-methyl-uridine at position 1939 (m5U1939) in 23S rRNA. This Shewanella woodyi (strain ATCC 51908 / MS32) protein is 23S rRNA (uracil(1939)-C(5))-methyltransferase RlmD.